Reading from the N-terminus, the 211-residue chain is tRNA (guanine-N(7)-)-methyltransferase (211 aa).

Positions 44, 69, 96, and 118 each coordinate S-adenosyl-L-methionine. Asp-118 is a catalytic residue. Position 122 (Lys-122) interacts with substrate. The interval 124–129 (RHEKRR) is interaction with RNA. Residues Asp-154 and 191–194 (TEYE) contribute to the substrate site.

Belongs to the class I-like SAM-binding methyltransferase superfamily. TrmB family.

It catalyses the reaction guanosine(46) in tRNA + S-adenosyl-L-methionine = N(7)-methylguanosine(46) in tRNA + S-adenosyl-L-homocysteine. It functions in the pathway tRNA modification; N(7)-methylguanine-tRNA biosynthesis. Its function is as follows. Catalyzes the formation of N(7)-methylguanine at position 46 (m7G46) in tRNA. The sequence is that of tRNA (guanine-N(7)-)-methyltransferase from Streptococcus pneumoniae (strain Taiwan19F-14).